The primary structure comprises 314 residues: Putative S-adenosyl-L-methionine-dependent methyltransferase MAV_4441 (314 aa).

S-adenosyl-L-methionine-binding positions include aspartate 138 and 167–168 (DL).

Belongs to the UPF0677 family.

Its function is as follows. Exhibits S-adenosyl-L-methionine-dependent methyltransferase activity. The sequence is that of Putative S-adenosyl-L-methionine-dependent methyltransferase MAV_4441 from Mycobacterium avium (strain 104).